The primary structure comprises 316 residues: 4-hydroxy-3-methylbut-2-enyl diphosphate reductase (316 aa).

C12 serves as a coordination point for [4Fe-4S] cluster. (2E)-4-hydroxy-3-methylbut-2-enyl diphosphate contacts are provided by H41 and H74. Dimethylallyl diphosphate is bound by residues H41 and H74. H41 and H74 together coordinate isopentenyl diphosphate. Residue C96 coordinates [4Fe-4S] cluster. H124 contributes to the (2E)-4-hydroxy-3-methylbut-2-enyl diphosphate binding site. H124 provides a ligand contact to dimethylallyl diphosphate. H124 is an isopentenyl diphosphate binding site. The active-site Proton donor is the E126. Position 169 (T169) interacts with (2E)-4-hydroxy-3-methylbut-2-enyl diphosphate. C199 contacts [4Fe-4S] cluster. Residues S227, S228, N229, and S271 each contribute to the (2E)-4-hydroxy-3-methylbut-2-enyl diphosphate site. Residues S227, S228, N229, and S271 each coordinate dimethylallyl diphosphate. Positions 227, 228, 229, and 271 each coordinate isopentenyl diphosphate.

The protein belongs to the IspH family. It depends on [4Fe-4S] cluster as a cofactor.

The catalysed reaction is isopentenyl diphosphate + 2 oxidized [2Fe-2S]-[ferredoxin] + H2O = (2E)-4-hydroxy-3-methylbut-2-enyl diphosphate + 2 reduced [2Fe-2S]-[ferredoxin] + 2 H(+). It catalyses the reaction dimethylallyl diphosphate + 2 oxidized [2Fe-2S]-[ferredoxin] + H2O = (2E)-4-hydroxy-3-methylbut-2-enyl diphosphate + 2 reduced [2Fe-2S]-[ferredoxin] + 2 H(+). Its pathway is isoprenoid biosynthesis; dimethylallyl diphosphate biosynthesis; dimethylallyl diphosphate from (2E)-4-hydroxy-3-methylbutenyl diphosphate: step 1/1. The protein operates within isoprenoid biosynthesis; isopentenyl diphosphate biosynthesis via DXP pathway; isopentenyl diphosphate from 1-deoxy-D-xylulose 5-phosphate: step 6/6. Catalyzes the conversion of 1-hydroxy-2-methyl-2-(E)-butenyl 4-diphosphate (HMBPP) into a mixture of isopentenyl diphosphate (IPP) and dimethylallyl diphosphate (DMAPP). Acts in the terminal step of the DOXP/MEP pathway for isoprenoid precursor biosynthesis. This chain is 4-hydroxy-3-methylbut-2-enyl diphosphate reductase, found in Xylella fastidiosa (strain M12).